We begin with the raw amino-acid sequence, 370 residues long: S-adenosylmethionine decarboxylase proenzyme (370 aa).

F28 is a binding site for substrate. Catalysis depends on residues E29 and E32. E85 is a substrate binding site. Residue S86 is the Schiff-base intermediate with substrate; via pyruvic acid of the active site. Position 86 is a pyruvic acid (Ser); by autocatalysis (S86). C100 functions as the Proton donor; for catalytic activity in the catalytic mechanism. Catalysis depends on proton acceptor; for processing activity residues S249 and H262. E266 provides a ligand contact to substrate.

Belongs to the eukaryotic AdoMetDC family. In terms of assembly, forms a heterodimer with catalytically inactive AdoMetDC prozyme; heterodimerization is required to activate AdoMetDC. Pyruvate serves as cofactor. In terms of processing, is synthesized initially as an inactive proenzyme. Formation of the active enzyme involves a self-maturation process in which the active site pyruvoyl group is generated from an internal serine residue via an autocatalytic post-translational modification. Two non-identical subunits are generated from the proenzyme in this reaction, and the pyruvate is formed at the N-terminus of the alpha chain, which is derived from the carboxyl end of the proenzyme. The post-translation cleavage follows an unusual pathway, termed non-hydrolytic serinolysis, in which the side chain hydroxyl group of the serine supplies its oxygen atom to form the C-terminus of the beta chain, while the remainder of the serine residue undergoes an oxidative deamination to produce ammonia and the pyruvoyl group blocking the N-terminus of the alpha chain.

The enzyme catalyses S-adenosyl-L-methionine + H(+) = S-adenosyl 3-(methylsulfanyl)propylamine + CO2. Its pathway is amine and polyamine biosynthesis; S-adenosylmethioninamine biosynthesis; S-adenosylmethioninamine from S-adenosyl-L-methionine: step 1/1. Its activity is regulated as follows. Allosterically activated by AdoMetDC prozyme. Activated by putrescine and to a lesser extent by spermidine, norspermidine and spermine. Inhibited by 5'-([(Z)-4-amino-2-butenyl]methylamino)-5'-deoxyadenosine (MDL 73811). Functionally, in association with the catalytically inactive AdoMetDC prozyme, catalyzes the decarboxylation of S-adenosyl-L-methionine which is essential for the biosynthesis of the polyamine spermidine. Required for growth and survival during the bloodstream life cycle stage. The protein is S-adenosylmethionine decarboxylase proenzyme of Trypanosoma brucei brucei.